The following is a 420-amino-acid chain: Dihydrolipoyllysine-residue succinyltransferase component of 2-oxoglutarate dehydrogenase complex (420 aa).

The Lipoyl-binding domain occupies 1 to 76; the sequence is MAEVKVPELA…EVGQAVAVVG (76 aa). The residue at position 42 (lysine 42) is an N6-lipoyllysine. A disordered region spans residues 75–199; sequence VGEGQVNTSN…IREKMSRRKK (125 aa). The segment covering 81–90 has biased composition (polar residues); it reads NTSNDSSNES. Basic and acidic residues predominate over residues 91-102; the sequence is SQKDEAKEKETP. Residues 103-127 show a composition bias toward polar residues; the sequence is KQSNPNSSESENTQDNSQQRINATP. Residues 124 to 160 enclose the Peripheral subunit-binding (PSBD) domain; sequence NATPSARRHARKNGVDLSEVSGKGNDVLRKDDVENSQ. Residues 149-158 are compositionally biased toward basic and acidic residues; that stretch reads DVLRKDDVEN. Residues 159–174 show a composition bias toward low complexity; that stretch reads SQKSSSQTAKSESKSQ. Residues 175 to 186 are compositionally biased toward polar residues; the sequence is NSGSKQTNNNPS. Catalysis depends on residues histidine 391 and aspartate 395.

It belongs to the 2-oxoacid dehydrogenase family. Forms a 24-polypeptide structural core with octahedral symmetry. Part of the 2-oxoglutarate dehydrogenase (OGDH) complex composed of E1 (2-oxoglutarate dehydrogenase), E2 (dihydrolipoamide succinyltransferase) and E3 (dihydrolipoamide dehydrogenase); the complex contains multiple copies of the three enzymatic components (E1, E2 and E3). (R)-lipoate serves as cofactor.

It carries out the reaction N(6)-[(R)-dihydrolipoyl]-L-lysyl-[protein] + succinyl-CoA = N(6)-[(R)-S(8)-succinyldihydrolipoyl]-L-lysyl-[protein] + CoA. Its pathway is amino-acid degradation; L-lysine degradation via saccharopine pathway; glutaryl-CoA from L-lysine: step 6/6. Its function is as follows. E2 component of the 2-oxoglutarate dehydrogenase (OGDH) complex which catalyzes the second step in the conversion of 2-oxoglutarate to succinyl-CoA and CO(2). This chain is Dihydrolipoyllysine-residue succinyltransferase component of 2-oxoglutarate dehydrogenase complex (odhB), found in Staphylococcus epidermidis (strain ATCC 35984 / DSM 28319 / BCRC 17069 / CCUG 31568 / BM 3577 / RP62A).